The chain runs to 452 residues: tRNA modification GTPase MnmE (452 aa).

(6S)-5-formyl-5,6,7,8-tetrahydrofolate-binding residues include Arg-21, Glu-78, and Lys-118. Residues 214–375 form the TrmE-type G domain; the sequence is GMKVVIAGRP…LREHLKQAMG (162 aa). Asn-224 contacts K(+). Residues 224 to 229, 243 to 249, and 268 to 271 contribute to the GTP site; these read NAGKSS, TDIAGTT, and DTAG. A Mg(2+)-binding site is contributed by Ser-228. K(+)-binding residues include Thr-243, Ile-245, and Thr-248. Thr-249 contributes to the Mg(2+) binding site. Lys-452 is a binding site for (6S)-5-formyl-5,6,7,8-tetrahydrofolate.

The protein belongs to the TRAFAC class TrmE-Era-EngA-EngB-Septin-like GTPase superfamily. TrmE GTPase family. In terms of assembly, homodimer. Heterotetramer of two MnmE and two MnmG subunits. It depends on K(+) as a cofactor.

The protein localises to the cytoplasm. Exhibits a very high intrinsic GTPase hydrolysis rate. Involved in the addition of a carboxymethylaminomethyl (cmnm) group at the wobble position (U34) of certain tRNAs, forming tRNA-cmnm(5)s(2)U34. The chain is tRNA modification GTPase MnmE from Haemophilus influenzae (strain PittGG).